Here is a 469-residue protein sequence, read N- to C-terminus: Glutamine synthetase (469 aa).

The GS beta-grasp domain occupies 13–97 (HEVKFVDLRF…IRCDILEPGT (85 aa)). Residues 105–469 (PRSIAKRAED…PVEFELYYSV (365 aa)) form the GS catalytic domain. Residues Glu-130 and Glu-132 each coordinate Mg(2+). Residue Glu-208 coordinates ATP. Glu-213 and Glu-221 together coordinate Mg(2+). L-glutamate is bound by residues 265–266 (NG) and Gly-266. Mg(2+) is bound at residue His-270. ATP is bound by residues 272–274 (HMS) and Ser-274. Residues Arg-322, Glu-328, and Arg-340 each contribute to the L-glutamate site. Residues Arg-340, Arg-345, and Lys-353 each contribute to the ATP site. Glu-358 is a binding site for Mg(2+). Position 360 (Arg-360) interacts with L-glutamate. Tyr-398 carries the post-translational modification O-AMP-tyrosine.

Belongs to the glutamine synthetase family. In terms of assembly, oligomer of 12 subunits arranged in the form of two hexagons. Mn(2+) serves as cofactor.

The protein localises to the cytoplasm. The catalysed reaction is L-glutamate + NH4(+) + ATP = L-glutamine + ADP + phosphate + H(+). Its activity is regulated as follows. When cellular nitrogen levels are high, the C-terminal adenylyl transferase (AT) of GlnE inhibits GlnA by covalent transfer of an adenylyl group from ATP to Tyr-398. Conversely, when nitrogen levels are low, the N-terminal adenylyl removase (AR) of GlnE activates GlnA by removing the adenylyl group by phosphorolysis. The fully adenylated enzyme complex is inactive. Its function is as follows. Catalyzes the ATP-dependent biosynthesis of glutamine from glutamate and ammonia. This is Glutamine synthetase from Salmonella typhi.